We begin with the raw amino-acid sequence, 377 residues long: Cytochrome b (377 aa).

4 helical membrane passes run 33–53 (FGSL…FLAM), 77–98 (WLIR…YLHT), 113–133 (WTMG…GYVL), and 178–198 (FFMI…VHLL). His83 and His97 together coordinate heme b. 2 residues coordinate heme b: His182 and His196. A ubiquinone is bound at residue His201. A run of 4 helical transmembrane segments spans residues 226-246 (YKDL…SLLS), 288-308 (LGGV…PLSS), 320-340 (FNQI…WIGA), and 347-367 (FIIM…LNPM).

Belongs to the cytochrome b family. As to quaternary structure, the main subunits of complex b-c1 are: cytochrome b, cytochrome c1 and the Rieske protein. Heme b is required as a cofactor.

Its subcellular location is the mitochondrion inner membrane. Functionally, component of the ubiquinol-cytochrome c reductase complex (complex III or cytochrome b-c1 complex) that is part of the mitochondrial respiratory chain. The b-c1 complex mediates electron transfer from ubiquinol to cytochrome c. Contributes to the generation of a proton gradient across the mitochondrial membrane that is then used for ATP synthesis. The chain is Cytochrome b (MT-CYB) from Tetrodontophora bielanensis (Giant springtail).